Reading from the N-terminus, the 62-residue chain is uncharacterized protein (62 aa).

This is an uncharacterized protein from Escherichia coli O157:H7.